The sequence spans 556 residues: Formate--tetrahydrofolate ligase (556 aa).

65–72 (TPAGEGKS) contributes to the ATP binding site.

Belongs to the formate--tetrahydrofolate ligase family.

It carries out the reaction (6S)-5,6,7,8-tetrahydrofolate + formate + ATP = (6R)-10-formyltetrahydrofolate + ADP + phosphate. The protein operates within one-carbon metabolism; tetrahydrofolate interconversion. This is Formate--tetrahydrofolate ligase from Streptococcus agalactiae serotype III (strain NEM316).